The chain runs to 249 residues: tRNA pseudouridine synthase A (249 aa).

Asp52 serves as the catalytic Nucleophile. Tyr111 is a substrate binding site.

It belongs to the tRNA pseudouridine synthase TruA family. In terms of assembly, homodimer.

The enzyme catalyses uridine(38/39/40) in tRNA = pseudouridine(38/39/40) in tRNA. Formation of pseudouridine at positions 38, 39 and 40 in the anticodon stem and loop of transfer RNAs. In Caulobacter sp. (strain K31), this protein is tRNA pseudouridine synthase A.